The following is a 1057-amino-acid chain: Diacylglycerol kinase iota (1057 aa).

Positions 15–59 (AARGPARAPAAAAAAAASPPGPCSGAACAPSAAAGAGAMNPSSSA) are enriched in low complexity. Disordered stretches follow at residues 15 to 74 (AARG…SSGS) and 334 to 358 (LKAS…MEQE). Positions 337 to 352 (SNRKKKRTSFKRKASK) are enriched in basic residues. In terms of domain architecture, DAGKc spans 372–507 (PLMKPLLVFV…DRWNLHVERN (136 aa)). ANK repeat units follow at residues 950 to 979 (DHCS…SELL) and 986 to 1015 (TGET…SLRK). Over residues 1014–1024 (RKTDSKGKTPQ) the composition is skewed to basic and acidic residues. The disordered stretch occupies residues 1014–1033 (RKTDSKGKTPQERAQQAGDP). A PDZ-binding motif is present at residues 1055–1057 (TAV).

This sequence belongs to the eukaryotic diacylglycerol kinase family. Interacts (via PDZ-binding motif) with DLG4; controls the localization of DGKI to the synapse. Interacts (via PDZ-binding motif) with DLG1. Interacts (via PDZ-binding motif) with DLG2. Interacts (via PDZ-binding motif) with DLG3. May interact with RASGRP3; involved in the regulation of RASGRP3 activity. As to expression, specifically expressed in brain and retina. In brain, highly expressed in hippocampus, caudate nucleus, occipital pole, cerebral cortex, and cerebellum. Also detected in kidney.

The protein resides in the cell projection. It localises to the axon. Its subcellular location is the dendrite. It is found in the presynapse. The protein localises to the postsynapse. The protein resides in the postsynaptic density. It localises to the synaptic cell membrane. Its subcellular location is the cytoplasmic vesicle. It is found in the secretory vesicle. The protein localises to the synaptic vesicle membrane. The protein resides in the cytoplasm. It localises to the cytosol. Its subcellular location is the nucleus. The enzyme catalyses a 1,2-diacyl-sn-glycerol + ATP = a 1,2-diacyl-sn-glycero-3-phosphate + ADP + H(+). It catalyses the reaction 1,2-di-(9Z-octadecenoyl)-sn-glycerol + ATP = 1,2-di-(9Z-octadecenoyl)-sn-glycero-3-phosphate + ADP + H(+). It carries out the reaction 1-octadecanoyl-2-(5Z,8Z,11Z,14Z-eicosatetraenoyl)-sn-glycerol + ATP = 1-octadecanoyl-2-(5Z,8Z,11Z,14Z-eicosatetraenoyl)-sn-glycero-3-phosphate + ADP + H(+). The catalysed reaction is 1-octadecanoyl-2-(9Z,12Z)-octadecadienoyl-sn-glycerol + ATP = 1-octadecanoyl-2-(9Z,12Z-octadecadienoyl)-sn-glycero-3-phosphate + ADP + H(+). It participates in lipid metabolism; glycerolipid metabolism. Its function is as follows. Diacylglycerol kinase that converts diacylglycerol/DAG into phosphatidic acid/phosphatidate/PA and regulates the respective levels of these two bioactive lipids. Thereby, acts as a central switch between the signaling pathways activated by these second messengers with different cellular targets and opposite effects in numerous biological processes. Has probably no preference for any of the diacylglycerols in terms of the acyl chain composition, especially for the acyl chain at the sn-2 position. By controlling the diacylglycerol/DAG-mediated activation of RASGRP3, negatively regulates the Rap1 signaling pathway. May play a role in presynaptic diacylglycerol/DAG signaling and control neurotransmitter release during metabotropic glutamate receptor-dependent long-term depression. In Homo sapiens (Human), this protein is Diacylglycerol kinase iota.